Consider the following 134-residue polypeptide: Large ribosomal subunit protein uL18 (134 aa).

The protein belongs to the universal ribosomal protein uL18 family. Part of the 50S ribosomal subunit; part of the 5S rRNA/L5/L18/L25 subcomplex. Contacts the 5S and 23S rRNAs.

Its function is as follows. This is one of the proteins that bind and probably mediate the attachment of the 5S RNA into the large ribosomal subunit, where it forms part of the central protuberance. In Corynebacterium glutamicum (strain ATCC 13032 / DSM 20300 / JCM 1318 / BCRC 11384 / CCUG 27702 / LMG 3730 / NBRC 12168 / NCIMB 10025 / NRRL B-2784 / 534), this protein is Large ribosomal subunit protein uL18.